The sequence spans 398 residues: Succinate--CoA ligase [ADP-forming] subunit beta (398 aa).

Positions 9-254 (KALLKSYGAP…TTEEDDKEIE (246 aa)) constitute an ATP-grasp domain. Residues Lys-46, 53-55 (GRG), Glu-109, Ala-112, and Glu-117 each bind ATP. Residues Asn-209 and Asp-223 each coordinate Mg(2+). Substrate-binding positions include Asn-274 and 331 to 333 (GIM).

The protein belongs to the succinate/malate CoA ligase beta subunit family. Heterotetramer of two alpha and two beta subunits. It depends on Mg(2+) as a cofactor.

It carries out the reaction succinate + ATP + CoA = succinyl-CoA + ADP + phosphate. The enzyme catalyses GTP + succinate + CoA = succinyl-CoA + GDP + phosphate. Its pathway is carbohydrate metabolism; tricarboxylic acid cycle; succinate from succinyl-CoA (ligase route): step 1/1. In terms of biological role, succinyl-CoA synthetase functions in the citric acid cycle (TCA), coupling the hydrolysis of succinyl-CoA to the synthesis of either ATP or GTP and thus represents the only step of substrate-level phosphorylation in the TCA. The beta subunit provides nucleotide specificity of the enzyme and binds the substrate succinate, while the binding sites for coenzyme A and phosphate are found in the alpha subunit. The sequence is that of Succinate--CoA ligase [ADP-forming] subunit beta from Rhizobium meliloti (strain 1021) (Ensifer meliloti).